The primary structure comprises 329 residues: Glycerol-3-phosphate dehydrogenase [NAD(P)+] (329 aa).

NADPH contacts are provided by Y14, R34, and K108. Positions 108, 137, and 139 each coordinate sn-glycerol 3-phosphate. A141 serves as a coordination point for NADPH. The sn-glycerol 3-phosphate site is built by K192, D245, S255, R256, and N257. K192 functions as the Proton acceptor in the catalytic mechanism. Residue R256 participates in NADPH binding. The NADPH site is built by I280 and E282.

The protein belongs to the NAD-dependent glycerol-3-phosphate dehydrogenase family.

The protein resides in the cytoplasm. It catalyses the reaction sn-glycerol 3-phosphate + NAD(+) = dihydroxyacetone phosphate + NADH + H(+). It carries out the reaction sn-glycerol 3-phosphate + NADP(+) = dihydroxyacetone phosphate + NADPH + H(+). It participates in membrane lipid metabolism; glycerophospholipid metabolism. Functionally, catalyzes the reduction of the glycolytic intermediate dihydroxyacetone phosphate (DHAP) to sn-glycerol 3-phosphate (G3P), the key precursor for phospholipid synthesis. The sequence is that of Glycerol-3-phosphate dehydrogenase [NAD(P)+] from Wigglesworthia glossinidia brevipalpis.